The primary structure comprises 250 residues: MGGHSHWAGIKHKKALLDSKRGKVFTRIIREITIAAKMGGAELENNPRLRKAVEDAKAANMPADNIKRAIMKGTGQLEGATYEEITYEGYGPSSIAVIVDCTTDNKNRTFSEIRKIFTSRGGSIGTTGCVSYMFKKKGLIIINKETISEESLMDIAIEAGADDIKSESEVHEVFTAPESLDIVKKALEEKGVKTESATLTMIPDTETEITDENAAQSIMKMMDELDDHDDTKAVYSNYNIPDEIMEKISK.

This sequence belongs to the TACO1 family.

It localises to the cytoplasm. This chain is Probable transcriptional regulatory protein Emin_1151, found in Elusimicrobium minutum (strain Pei191).